Consider the following 357-residue polypeptide: MADLKEIYNEELISQLIHHVRSSYPDFNKNRFLDTLRLEDWPELTLKERMRRVTVSLYETLPKQYVEALTILRDTAPHFKGLSGILFPDYVEQYGLAHWEESIKALESFTQYSTSEFAVRPFLLLDQEKMIAQLLAWSEHKNEHVRRLASEGSRPRLPWGKSIPALKSDPSPVLPILEKLMQDESLYVRKSVANNLNDISKTHPHLLRKVADQWYGTHPHTDWIIKHAYRTLLKKGDKQALALFGYENADSIQLHDLTCQPKRIVIGESLEFSFYIHSDRDQKVRIEYAIDFVKARGQRHQKVFKITETNIRKNETKSYTRIQSFKDLTTRKHYKGIHTLSVIINGEVKDSLDFQVC.

The stretch at 173–211 (VLPILEKLMQDESLYVRKSVANNLNDISKTHPHLLRKVA) is one HEAT repeat.

This is an uncharacterized protein from Bacillus subtilis (strain 168).